We begin with the raw amino-acid sequence, 56 residues long: Large ribosomal subunit protein bL32c (56 aa).

The protein belongs to the bacterial ribosomal protein bL32 family.

It localises to the plastid. The protein localises to the chloroplast. In Huperzia lucidula (Shining clubmoss), this protein is Large ribosomal subunit protein bL32c.